A 364-amino-acid chain; its full sequence is Alanine racemase (364 aa).

The active-site Proton acceptor; specific for D-alanine is the Lys35. Lys35 carries the post-translational modification N6-(pyridoxal phosphate)lysine. Arg136 contributes to the substrate binding site. The active-site Proton acceptor; specific for L-alanine is Tyr261. Met309 is a binding site for substrate.

This sequence belongs to the alanine racemase family. The cofactor is pyridoxal 5'-phosphate.

The enzyme catalyses L-alanine = D-alanine. Its pathway is amino-acid biosynthesis; D-alanine biosynthesis; D-alanine from L-alanine: step 1/1. Functionally, catalyzes the interconversion of L-alanine and D-alanine. May also act on other amino acids. The polypeptide is Alanine racemase (alr) (Shewanella amazonensis (strain ATCC BAA-1098 / SB2B)).